The chain runs to 292 residues: NAC domain-containing protein 105 (292 aa).

Residues 12–162 enclose the NAC domain; sequence IPPGFRFHPT…GWVVCRAFKK (151 aa). Residues 112-168 mediate DNA binding; the sequence is IGMRKTLVFYRGRAPNGQKSDWIIHEYYSLESHQNSPPQEEGWVVCRAFKKRTTIPT. Over residues 237-259 the composition is skewed to polar residues; it reads LPQLESPSLPSEITPHSTTFSEN. The tract at residues 237 to 269 is disordered; that stretch reads LPQLESPSLPSEITPHSTTFSENSSRKDDMSSE. Over residues 260–269 the composition is skewed to basic and acidic residues; the sequence is SSRKDDMSSE.

It belongs to the plant vascular related NAC-domain protein family. Interacts with NAC030/VND7. Detected in root protoxylem and metaxylem poles and in vessels of protoxylems, outermost metaxylems, inner metaxylems, shoots and hypocotyls. Expressed in roots, hypocotyls, cotyledons and leaves. Present in developing xylems. Present in root developing xylems. Specifically expressed in vessels but not in interfascicular fibers in stems.

It is found in the nucleus. Its function is as follows. Transcription activator that binds to the secondary wall NAC binding element (SNBE), 5'-(T/A)NN(C/T)(T/C/G)TNNNNNNNA(A/C)GN(A/C/T)(A/T)-3', in the promoter of target genes. Involved in xylem formation by promoting the expression of secondary wall-associated transcription factors and of genes involved in secondary wall biosynthesis and programmed cell death, genes driven by the secondary wall NAC binding element (SNBE). Triggers thickening of secondary walls. The chain is NAC domain-containing protein 105 from Arabidopsis thaliana (Mouse-ear cress).